Reading from the N-terminus, the 735-residue chain is Protein RETICULATA-RELATED 5, chloroplastic (735 aa).

Residues 1 to 75 (MKPTTNGGLL…TRRAILVAPP (75 aa)) constitute a chloroplast transit peptide. Helical transmembrane passes span 519–539 (ASVV…FISY) and 582–602 (VIIG…AAVG). The segment covering 714 to 726 (ASQSTVEYSTTEE) has biased composition (polar residues). The tract at residues 714–735 (ASQSTVEYSTTEEASMDDLKNQ) is disordered.

This sequence belongs to the RETICULATA family.

The protein localises to the plastid. It is found in the chloroplast membrane. Functionally, may play a role in leaf development. In Arabidopsis thaliana (Mouse-ear cress), this protein is Protein RETICULATA-RELATED 5, chloroplastic.